We begin with the raw amino-acid sequence, 342 residues long: Ferredoxin--NADP reductase (342 aa).

The FAD site is built by Cys17, Asp36, Gln44, Tyr49, Val89, Phe124, Asp289, and Thr330.

The protein belongs to the ferredoxin--NADP reductase type 2 family. In terms of assembly, homodimer. FAD serves as cofactor.

It carries out the reaction 2 reduced [2Fe-2S]-[ferredoxin] + NADP(+) + H(+) = 2 oxidized [2Fe-2S]-[ferredoxin] + NADPH. The chain is Ferredoxin--NADP reductase from Bradyrhizobium sp. (strain BTAi1 / ATCC BAA-1182).